We begin with the raw amino-acid sequence, 598 residues long: Nuclear receptor subfamily 4 group A member 2 (598 aa).

The segment at 1 to 22 is disordered; the sequence is MPCVQAQYGSSPQGASPASQSY. Over residues 8-22 the composition is skewed to low complexity; that stretch reads YGSSPQGASPASQSY. Positions 260 to 335 form a DNA-binding region, nuclear receptor; it reads EGLCAVCGDN…VGMVKEVVRT (76 aa). NR C4-type zinc fingers lie at residues 263 to 283 and 299 to 323; these read CAVC…CEGC and CLAN…FQKC. The Bipartite nuclear localization signal (NLS1) motif lies at 287-314; sequence FKRTVQKNAKYVCLANKNCPVDKRRRNR. Residues 337-361 are disordered; the sequence is SLKGRRGRLPSKPKSPQDPSPPSPP. The Nuclear localization signal (NLS1) motif lies at 338–350; it reads LKGRRGRLPSKPK. Pro residues predominate over residues 352–361; that stretch reads PQDPSPPSPP. The 236-residue stretch at 360-595 folds into the NR LBD domain; it reads PPVSLISALV…AIIDKLFLDT (236 aa). The nuclear export sequence (NES1) motif lies at 443–452; sequence FLELFVLRLA. The nuclear export sequence (NES2) motif lies at 568–577; that stretch reads QGLQRIFYLK.

The protein belongs to the nuclear hormone receptor family. NR4 subfamily. Interacts with SFPQ, NCOR2, SIN3A and HADC1. The interaction with NCOR2 increases in the absence of PITX3. Interacts with PER2. As to expression, brain.

Its subcellular location is the cytoplasm. The protein localises to the nucleus. Transcriptional regulator which is important for the differentiation and maintenance of meso-diencephalic dopaminergic (mdDA) neurons during development. It is crucial for expression of a set of genes such as SLC6A3, SLC18A2, TH and DRD2 which are essential for development of mdDA neurons. This Mus musculus (Mouse) protein is Nuclear receptor subfamily 4 group A member 2 (Nr4a2).